We begin with the raw amino-acid sequence, 563 residues long: MSDDAGDTLATGDKAEVTEMPNSDSLPEDAEVHCDSAAVSHEPTPADPRGEGHENAAVQGAGAAAIGPPVQPQDANALEPPLNGDVTEDTLAECIDSVSLEAEPRSEIPLQEQNYLAVDSPPSGGGWAGWGSWGKSLLSSASATVGHGLTAVKEKAGATLRIHGVNSGSSEGAQPNTENGVPEITDAATDQGPAESPPTSPSSASRGMLSAITNVVQNTGKSVLTGGLDALEFIGKKTMNVLAESDPGFKRTKTLMERTVSLSQMLREAKEKEKQRLAQQLTMERTAHYGMLFDEYQGLSHLEALEILSNESESKVQSFLASLDGEKLELLKNDLISIKDIFAAKELENEENQEEQGLEEKGEEFARMLTELLFELHVAATPDKLNKAMKRAHDWVEEDQTVVSVDVAKVSEEETKKEEKEEKSQDPQEDKKEEKKTKTIEEVYMSSIESLAEVTARCIEQLHKVAELILHGQEEEKPAQDQAKVLIKLTTAMCNEVASLSKKFTNSLTTVGSNKKAEVLNPMISSVLLEGCNSTTYIQDAFQLLLPVLQVSHIQTSCLKAQP.

The segment at 1–84 (MSDDAGDTLA…ANALEPPLNG (84 aa)) is disordered. The segment covering 56-68 (AAVQGAGAAAIGP) has biased composition (low complexity). Ser-120 carries the phosphoserine modification. Positions 165–206 (VNSGSSEGAQPNTENGVPEITDAATDQGPAESPPTSPSSASR) are disordered. Positions 166-179 (NSGSSEGAQPNTEN) are enriched in polar residues. A phosphothreonine mark is found at Thr-185 and Thr-189. Ser-196 is subject to Phosphoserine. Thr-199 carries the post-translational modification Phosphothreonine. Residues Ser-202 and Ser-261 each carry the phosphoserine modification. Residues 343–367 (AAKELENEENQEEQGLEEKGEEFAR) are a coiled coil. Residues 411–436 (SEEETKKEEKEEKSQDPQEDKKEEKK) form a disordered region.

Belongs to the FAM114 family.

The protein resides in the cytoplasm. Functionally, may play a role in neuronal cell development. This chain is Protein NOXP20 (FAM114A1), found in Homo sapiens (Human).